Here is a 242-residue protein sequence, read N- to C-terminus: 3-dehydroquinate dehydratase (242 aa).

3-dehydroquinate is bound by residues 39-41 and Arg73; that span reads EVR. His135 serves as the catalytic Proton donor/acceptor. The Schiff-base intermediate with substrate role is filled by Lys162. Positions 203 and 228 each coordinate 3-dehydroquinate.

It belongs to the type-I 3-dehydroquinase family. As to quaternary structure, homodimer.

The enzyme catalyses 3-dehydroquinate = 3-dehydroshikimate + H2O. It participates in metabolic intermediate biosynthesis; chorismate biosynthesis; chorismate from D-erythrose 4-phosphate and phosphoenolpyruvate: step 3/7. Its function is as follows. Involved in the third step of the chorismate pathway, which leads to the biosynthesis of aromatic amino acids. Catalyzes the cis-dehydration of 3-dehydroquinate (DHQ) and introduces the first double bond of the aromatic ring to yield 3-dehydroshikimate. The polypeptide is 3-dehydroquinate dehydratase (Methanosarcina acetivorans (strain ATCC 35395 / DSM 2834 / JCM 12185 / C2A)).